A 484-amino-acid chain; its full sequence is Nuclear rim protein 1 (484 aa).

Residue Ser-3 is modified to Phosphoserine. A run of 2 helical transmembrane segments spans residues 145–165 and 252–272; these read FTIF…MFGY and TAIV…AIVF. The tract at residues 416-457 is disordered; sequence SSNENLEKGGAYLPNQDQNRPSKSLSPLRKTPLSARQKRFEG. A Phosphoserine modification is found at Ser-417. Residues 430-440 are compositionally biased toward polar residues; it reads NQDQNRPSKSL. Phosphoserine is present on Ser-474.

It belongs to the NUR1 family. As to quaternary structure, interacts with CSM1.

The protein resides in the nucleus membrane. In terms of biological role, member of a perinuclear network that controls recombination at multiple loci to maintain genome stability. Required for rDNA repeat stability. This chain is Nuclear rim protein 1 (NUR1), found in Saccharomyces cerevisiae (strain ATCC 204508 / S288c) (Baker's yeast).